The sequence spans 206 residues: Glycerol-3-phosphate acyltransferase (206 aa).

Helical transmembrane passes span 4 to 24 (TAFA…AVIV), 53 to 73 (LAAA…VALA), 86 to 106 (GIAL…FFGF), 116 to 136 (VGIL…TWLF), 137 to 157 (MAFV…LAPV), and 160 to 180 (FFIL…AIVV).

The protein belongs to the PlsY family. In terms of assembly, probably interacts with PlsX.

Its subcellular location is the cell inner membrane. It carries out the reaction an acyl phosphate + sn-glycerol 3-phosphate = a 1-acyl-sn-glycero-3-phosphate + phosphate. Its pathway is lipid metabolism; phospholipid metabolism. Catalyzes the transfer of an acyl group from acyl-phosphate (acyl-PO(4)) to glycerol-3-phosphate (G3P) to form lysophosphatidic acid (LPA). This enzyme utilizes acyl-phosphate as fatty acyl donor, but not acyl-CoA or acyl-ACP. This is Glycerol-3-phosphate acyltransferase from Chromobacterium violaceum (strain ATCC 12472 / DSM 30191 / JCM 1249 / CCUG 213 / NBRC 12614 / NCIMB 9131 / NCTC 9757 / MK).